A 277-amino-acid polypeptide reads, in one-letter code: Shikimate dehydrogenase (NADP(+)) (277 aa).

Shikimate is bound by residues Ser19–Ser21 and Thr66. Lys70 acts as the Proton acceptor in catalysis. Asp82 contacts NADP(+). Residues Asn91 and Asp107 each coordinate shikimate. NADP(+)-binding positions include Gly133 to Ala137, Asn157 to Arg162, and Leu222. Tyr224 lines the shikimate pocket. An NADP(+)-binding site is contributed by Gly245.

This sequence belongs to the shikimate dehydrogenase family. Homodimer.

The enzyme catalyses shikimate + NADP(+) = 3-dehydroshikimate + NADPH + H(+). The protein operates within metabolic intermediate biosynthesis; chorismate biosynthesis; chorismate from D-erythrose 4-phosphate and phosphoenolpyruvate: step 4/7. In terms of biological role, involved in the biosynthesis of the chorismate, which leads to the biosynthesis of aromatic amino acids. Catalyzes the reversible NADPH linked reduction of 3-dehydroshikimate (DHSA) to yield shikimate (SA). This chain is Shikimate dehydrogenase (NADP(+)), found in Roseobacter denitrificans (strain ATCC 33942 / OCh 114) (Erythrobacter sp. (strain OCh 114)).